Consider the following 293-residue polypeptide: Ribosomal protein L11 methyltransferase (293 aa).

Residues Thr145, Gly166, Asp188, and Asn230 each contribute to the S-adenosyl-L-methionine site.

This sequence belongs to the methyltransferase superfamily. PrmA family.

Its subcellular location is the cytoplasm. It carries out the reaction L-lysyl-[protein] + 3 S-adenosyl-L-methionine = N(6),N(6),N(6)-trimethyl-L-lysyl-[protein] + 3 S-adenosyl-L-homocysteine + 3 H(+). Functionally, methylates ribosomal protein L11. In Serratia proteamaculans (strain 568), this protein is Ribosomal protein L11 methyltransferase.